Consider the following 213-residue polypeptide: Orotate phosphoribosyltransferase (213 aa).

Residue Lys26 coordinates 5-phospho-alpha-D-ribose 1-diphosphate. 34 to 35 (FF) provides a ligand contact to orotate. Residues 72 to 73 (YK), Arg99, Lys100, Lys103, His105, and 124 to 132 (DDVITAGTA) each bind 5-phospho-alpha-D-ribose 1-diphosphate. Orotate contacts are provided by Thr128 and Arg156.

It belongs to the purine/pyrimidine phosphoribosyltransferase family. PyrE subfamily. Homodimer. Mg(2+) is required as a cofactor.

The enzyme catalyses orotidine 5'-phosphate + diphosphate = orotate + 5-phospho-alpha-D-ribose 1-diphosphate. It functions in the pathway pyrimidine metabolism; UMP biosynthesis via de novo pathway; UMP from orotate: step 1/2. Its function is as follows. Catalyzes the transfer of a ribosyl phosphate group from 5-phosphoribose 1-diphosphate to orotate, leading to the formation of orotidine monophosphate (OMP). The sequence is that of Orotate phosphoribosyltransferase from Yersinia enterocolitica serotype O:8 / biotype 1B (strain NCTC 13174 / 8081).